Reading from the N-terminus, the 71-residue chain is Large ribosomal subunit protein bL28 (71 aa).

It belongs to the bacterial ribosomal protein bL28 family.

The sequence is that of Large ribosomal subunit protein bL28 from Rubrobacter xylanophilus (strain DSM 9941 / JCM 11954 / NBRC 16129 / PRD-1).